The sequence spans 584 residues: Alkaline nuclease (584 aa).

Residues 409–430 are disordered; that stretch reads GGGADHHLRGSPGDSPPPIPFE.

It belongs to the herpesviridae alkaline nuclease family. As to quaternary structure, interacts with major DNA-binding protein; this interaction increases the nuclease processivity of the alkaline exonuclease.

It localises to the host nucleus. The protein localises to the host cytoplasm. In terms of biological role, plays a role in processing non linear or branched viral DNA intermediates in order to promote the production of mature packaged unit-length linear progeny viral DNA molecules. Exhibits endonuclease and exonuclease activities and accepts both double-stranded and single-stranded DNA as substrate. Exonuclease digestion of DNA is in the 5'-&gt; 3' direction and the products are 5'-monophosphate nucleosides. Additionally, forms a recombinase with the major DNA-binding protein, which displays strand exchange activity. This chain is Alkaline nuclease (UL98), found in Human cytomegalovirus (strain AD169) (HHV-5).